A 500-amino-acid chain; its full sequence is NAD(P)H-quinone oxidoreductase chain 4, chloroplastic (500 aa).

14 helical membrane passes run 4-24 (FPWLTIIVVFPIFAGSLIFFL), 37-57 (ICICILELLLTTYAFCYHFQL), 87-107 (IGPILLTGFITTLATLAAWPI), 113-130 (LFHFIMLAMYSGQIGSFS), 134-154 (LLLFFIMWELELIPVYLLLAM), 167-187 (FILYTAGGSVFLLMGVLGVAL), 208-228 (VLEIIFYIGFFIAFAVKLPII), 242-262 (HYSTCMLLAGILLKMGAYGLI), 272-292 (AHSIFSPWLMIIGTIQIIYAA), 305-325 (IAYSSVSHMGFIIIGISSLTD), 330-350 (GALLQIISHGFIGAALFFLAG), 386-406 (LALPGMSGFVAELIVFFGIIT), 411-431 (VLIPKILITFVMAIGMILTPI), and 462-482 (LFLSISIFLPVIGIGIYPDFV).

Belongs to the complex I subunit 4 family.

It is found in the plastid. The protein localises to the chloroplast thylakoid membrane. The catalysed reaction is a plastoquinone + NADH + (n+1) H(+)(in) = a plastoquinol + NAD(+) + n H(+)(out). The enzyme catalyses a plastoquinone + NADPH + (n+1) H(+)(in) = a plastoquinol + NADP(+) + n H(+)(out). This chain is NAD(P)H-quinone oxidoreductase chain 4, chloroplastic, found in Atropa belladonna (Belladonna).